The following is a 165-amino-acid chain: U11/U12 small nuclear ribonucleoprotein 25 kDa protein (165 aa).

One can recognise a Ubiquitin-like domain in the interval 52-137 (MRLSVVKLDG…IRNNSQVTFM (86 aa)). Residues 145 to 165 (RGRHSKRKKHRLFRSLHKTSS) are disordered.

Component of the U11/U12 snRNPs that are part of the U12-type spliceosome.

The protein localises to the nucleus. The protein is U11/U12 small nuclear ribonucleoprotein 25 kDa protein (SNRNP25) of Arabidopsis thaliana (Mouse-ear cress).